Reading from the N-terminus, the 225-residue chain is UPF0758 protein SO_4248 (225 aa).

An MPN domain is found at 102–224 (VLTNPDLTRD…IVSFAERGWI (123 aa)). Zn(2+)-binding residues include His-173, His-175, and Asp-186. The JAMM motif signature appears at 173-186 (HNHPSGIAEPSQAD).

This sequence belongs to the UPF0758 family.

This is UPF0758 protein SO_4248 from Shewanella oneidensis (strain ATCC 700550 / JCM 31522 / CIP 106686 / LMG 19005 / NCIMB 14063 / MR-1).